A 93-amino-acid chain; its full sequence is Small ribosomal subunit protein uS19 (93 aa).

It belongs to the universal ribosomal protein uS19 family.

Protein S19 forms a complex with S13 that binds strongly to the 16S ribosomal RNA. The chain is Small ribosomal subunit protein uS19 from Campylobacter fetus subsp. fetus (strain 82-40).